Consider the following 908-residue polypeptide: Glutamate receptor ionotropic, kainate 2 (908 aa).

The signal sequence occupies residues 1–31 (MQRIAGITKMVTHRRWLGLLLLLLCVGYSHG). Topologically, residues 32–561 (MPHVLRFGGI…VFSFLNPLSP (530 aa)) are extracellular. N-linked (GlcNAc...) asparagine glycosylation is found at asparagine 67, asparagine 73, asparagine 275, asparagine 378, asparagine 412, asparagine 423, and asparagine 430. Cysteine 96 and cysteine 347 are joined by a disulfide. Proline 516, alanine 518, and arginine 523 together coordinate L-glutamate. A glycan (N-linked (GlcNAc...) asparagine) is linked at asparagine 546. Residues 562–582 (DIWMYILLAYLGVSCVLFVIA) form a helical membrane-spanning segment. The Cytoplasmic segment spans residues 583-638 (RFSPYEWYNPHPCNPDSDVVENNFTLLNSFWFGVGALMQQGSELMPKALSTRIVGG). The helical transmembrane segment at 639-659 (IWWFFTLIIISSYTANLAAFL) threads the bilayer. Residues 660 to 819 (TVERMESPID…KEASALGVQN (160 aa)) lie on the Extracellular side of the membrane. 3 residues coordinate L-glutamate: serine 689, threonine 690, and glutamate 738. A disulfide bridge connects residues cysteine 750 and cysteine 804. Asparagine 751 carries N-linked (GlcNAc...) asparagine glycosylation. A helical transmembrane segment spans residues 820–840 (IGGIFIVLAAGLVLSVFVAVG). Over 841 to 908 (EFLYKSKQNA…RRLPGKETMA (68 aa)) the chain is Cytoplasmic.

The protein belongs to the glutamate-gated ion channel (TC 1.A.10.1) family. GRIK2 subfamily. In terms of assembly, homotetramer and heterotetramer with GRIK5. Tetramers may be formed by the dimerization of dimers.

The protein localises to the cell membrane. It localises to the postsynaptic cell membrane. It catalyses the reaction Ca(2+)(in) = Ca(2+)(out). The catalysed reaction is Na(+)(in) = Na(+)(out). With respect to regulation, cold receptor activity activated by temperatures between 10-19 degrees Celsius. In terms of biological role, ionotropic glutamate receptor that functions as a cation-permeable ligand-gated ion channel, gated by L-glutamate and the glutamatergic agonist kainic acid. L-glutamate acts as an excitatory neurotransmitter at many synapses in the central nervous system. Binding of the excitatory neurotransmitter L-glutamate induces a conformation change, leading to the opening of the cation channel, and thereby converts the chemical signal to an electrical impulse. The receptor then desensitizes rapidly and enters a transient inactive state, characterized by the presence of bound agonist. Independent of its ionotropic glutamate receptor activity, acts as a thermoreceptor conferring sensitivity to cold temperatures. Functions in dorsal root ganglion neurons. The protein is Glutamate receptor ionotropic, kainate 2 of Danio rerio (Zebrafish).